Consider the following 538-residue polypeptide: Beta-1-syntrophin (538 aa).

Ala-2 carries the post-translational modification N-acetylalanine. PH domains lie at Arg-19 to Asn-298 and Glu-322 to His-433. A phosphoserine mark is found at Ser-87, Ser-126, and Ser-205. Positions Gly-112–Arg-195 constitute a PDZ domain. Residues Ser-205–Phe-237 form a disordered region. Thr-214 is subject to Phosphothreonine. Phosphoserine occurs at positions 219, 232, 236, and 389. Over residues Ser-225–Ser-236 the composition is skewed to low complexity. In terms of domain architecture, SU spans Pro-482 to Ala-538. Residues Pro-518–Ala-538 are calmodulin-binding.

This sequence belongs to the syntrophin family. As to quaternary structure, monomer and homodimer. Interacts with the other members of the syntrophin family SNTA1 and SNTB2; with the sodium channel proteins SCN4A and SCN5A. Interacts with the viral HTLV-1 TAX protein and with dystrophin protein DMD and related proteins DTNA and UTRN. Interacts with DTNB. Post-translationally, phosphorylated by CaM-kinase II. As to expression, ubiquitous.

The protein resides in the cell membrane. It is found in the sarcolemma. Its subcellular location is the cell junction. It localises to the cytoplasm. The protein localises to the cytoskeleton. Adapter protein that binds to and probably organizes the subcellular localization of a variety of membrane proteins. May link various receptors to the actin cytoskeleton and the dystrophin glycoprotein complex. This chain is Beta-1-syntrophin (SNTB1), found in Homo sapiens (Human).